Reading from the N-terminus, the 82-residue chain is Probable tautomerase XF_1725 (82 aa).

P2 (proton acceptor; via imino nitrogen) is an active-site residue.

Belongs to the 4-oxalocrotonate tautomerase family.

The protein is Probable tautomerase XF_1725 of Xylella fastidiosa (strain 9a5c).